The following is a 324-amino-acid chain: Beta-ketoacyl-[acyl-carrier-protein] synthase III (324 aa).

Catalysis depends on residues Cys113 and His251. The tract at residues 252 to 256 (QANKR) is ACP-binding. Asn281 is a catalytic residue.

It belongs to the thiolase-like superfamily. FabH family. Homodimer.

The protein localises to the cytoplasm. It carries out the reaction malonyl-[ACP] + acetyl-CoA + H(+) = 3-oxobutanoyl-[ACP] + CO2 + CoA. The protein operates within lipid metabolism; fatty acid biosynthesis. In terms of biological role, catalyzes the condensation reaction of fatty acid synthesis by the addition to an acyl acceptor of two carbons from malonyl-ACP. Catalyzes the first condensation reaction which initiates fatty acid synthesis and may therefore play a role in governing the total rate of fatty acid production. Possesses both acetoacetyl-ACP synthase and acetyl transacylase activities. Its substrate specificity determines the biosynthesis of branched-chain and/or straight-chain of fatty acids. The protein is Beta-ketoacyl-[acyl-carrier-protein] synthase III of Bartonella bacilliformis (strain ATCC 35685 / KC583 / Herrer 020/F12,63).